The chain runs to 302 residues: N(G),N(G)-dimethylarginine dimethylaminohydrolase (302 aa).

D102, R127, and R172 together coordinate substrate. H201 acts as the Proton donor in catalysis. Catalysis depends on C295, which acts as the Nucleophile.

Belongs to the DDAH family.

It carries out the reaction N(omega),N(omega)-dimethyl-L-arginine + H2O = dimethylamine + L-citrulline. The catalysed reaction is N(omega)-methyl-L-arginine + H2O = L-citrulline + methylamine. In terms of biological role, hydrolyzes N(G),N(G)-dimethyl-L-arginine (ADMA) and N(G)-monomethyl-L-arginine (MMA). This is N(G),N(G)-dimethylarginine dimethylaminohydrolase from Mycobacterium tuberculosis (strain ATCC 25618 / H37Rv).